Reading from the N-terminus, the 72-residue chain is Translation initiation factor IF-1 (72 aa).

Residues 1 to 72 form the S1-like domain; sequence MSKEDVIEVE…SRGRIVYRFK (72 aa).

This sequence belongs to the IF-1 family. Component of the 30S ribosomal translation pre-initiation complex which assembles on the 30S ribosome in the order IF-2 and IF-3, IF-1 and N-formylmethionyl-tRNA(fMet); mRNA recruitment can occur at any time during PIC assembly.

Its subcellular location is the cytoplasm. Its function is as follows. One of the essential components for the initiation of protein synthesis. Stabilizes the binding of IF-2 and IF-3 on the 30S subunit to which N-formylmethionyl-tRNA(fMet) subsequently binds. Helps modulate mRNA selection, yielding the 30S pre-initiation complex (PIC). Upon addition of the 50S ribosomal subunit IF-1, IF-2 and IF-3 are released leaving the mature 70S translation initiation complex. In Desulfitobacterium hafniense (strain Y51), this protein is Translation initiation factor IF-1.